The following is a 327-amino-acid chain: Zinc finger C2HC domain-containing protein 1A (327 aa).

The segment at 13 to 42 adopts a C2HC/C3H-type 1 zinc-finger fold; the sequence is ELVPCKICGRSFFPKVLKKHVPICQKTAAK. Zn(2+)-binding residues include cysteine 17, cysteine 20, histidine 32, and cysteine 36. Disordered stretches follow at residues 40 to 96 and 108 to 131; these read AAKR…KHEE and NQVIKDGGPLPPPPPPSYDPDYIQ. Over residues 46-56 the composition is skewed to basic and acidic residues; it reads VFDSGRQRAEG. Positions 63–76 are enriched in low complexity; that stretch reads KPIKPKLQSSSSSS. Positions 116-125 are enriched in pro residues; it reads PLPPPPPPSY. The C2HC/C3H-type 2 zinc-finger motif lies at 128–157; sequence DYIQCPYCQRRFGENAADRHIKFCKEQASR. Positions 132, 135, 147, and 151 each coordinate Zn(2+). The segment at 154-271 is disordered; it reads QASRISNKSK…NPSTGIGMNK (118 aa). A compositionally biased stretch (polar residues) spans 187-199; that stretch reads NSPTASSVSSRLP. The span at 211-229 shows a compositional bias: low complexity; the sequence is GIPSSKPSSTGSIKSTPSG. Polar residues-rich tracts occupy residues 233-245 and 255-267; these read LRNNSSSLTSPPS and VSQSSLRNPSTGI.

This sequence belongs to the ZC2HC1 family. It depends on Zn(2+) as a cofactor.

The polypeptide is Zinc finger C2HC domain-containing protein 1A (zc2hc1a) (Danio rerio (Zebrafish)).